The following is a 622-amino-acid chain: Probable potassium transport system protein Kup (622 aa).

12 helical membrane-spanning segments follow: residues 7 to 27, 44 to 64, 95 to 115, 133 to 153, 165 to 185, 199 to 219, 243 to 263, 290 to 310, 338 to 358, 370 to 390, 395 to 415, and 422 to 442; these read LAIG…LYAF, VLGV…IQYV, GWLV…DSMI, PELQ…LFVL, FAPV…ISIV, AVLF…SVVL, WFGF…AMIV, LVIL…SGAF, IYIP…VLTF, IAVT…LVGV, WYYA…YFAA, and DGGW…TTWA.

Belongs to the HAK/KUP transporter (TC 2.A.72) family.

It is found in the cell inner membrane. The enzyme catalyses K(+)(in) + H(+)(in) = K(+)(out) + H(+)(out). Functionally, transport of potassium into the cell. Likely operates as a K(+):H(+) symporter. The sequence is that of Probable potassium transport system protein Kup from Erythrobacter litoralis (strain HTCC2594).